Reading from the N-terminus, the 256-residue chain is 5-keto-4-deoxy-D-glucarate aldolase (256 aa).

The Proton acceptor role is filled by His-50. Gln-151 contacts substrate. Glu-153 lines the Mg(2+) pocket. Substrate is bound by residues Ser-178 and Asp-179. Asp-179 lines the Mg(2+) pocket.

Belongs to the HpcH/HpaI aldolase family. KDGluc aldolase subfamily. As to quaternary structure, homohexamer; trimer of dimers. Mg(2+) serves as cofactor.

The catalysed reaction is 5-dehydro-4-deoxy-D-glucarate = 2-hydroxy-3-oxopropanoate + pyruvate. The enzyme catalyses 2-dehydro-3-deoxy-D-glucarate = 2-hydroxy-3-oxopropanoate + pyruvate. It participates in carbohydrate acid metabolism; galactarate degradation; D-glycerate from galactarate: step 2/3. Functionally, catalyzes the reversible retro-aldol cleavage of both 5-keto-4-deoxy-D-glucarate and 2-keto-3-deoxy-D-glucarate to pyruvate and tartronic semialdehyde. This Escherichia coli O6:H1 (strain CFT073 / ATCC 700928 / UPEC) protein is 5-keto-4-deoxy-D-glucarate aldolase.